The primary structure comprises 82 residues: Phosphoribosylformylglycinamidine synthase subunit PurS (82 aa).

The protein belongs to the PurS family. As to quaternary structure, homodimer. Part of the FGAM synthase complex composed of 1 PurL, 1 PurQ and 2 PurS subunits.

The protein localises to the cytoplasm. It carries out the reaction N(2)-formyl-N(1)-(5-phospho-beta-D-ribosyl)glycinamide + L-glutamine + ATP + H2O = 2-formamido-N(1)-(5-O-phospho-beta-D-ribosyl)acetamidine + L-glutamate + ADP + phosphate + H(+). It participates in purine metabolism; IMP biosynthesis via de novo pathway; 5-amino-1-(5-phospho-D-ribosyl)imidazole from N(2)-formyl-N(1)-(5-phospho-D-ribosyl)glycinamide: step 1/2. In terms of biological role, part of the phosphoribosylformylglycinamidine synthase complex involved in the purines biosynthetic pathway. Catalyzes the ATP-dependent conversion of formylglycinamide ribonucleotide (FGAR) and glutamine to yield formylglycinamidine ribonucleotide (FGAM) and glutamate. The FGAM synthase complex is composed of three subunits. PurQ produces an ammonia molecule by converting glutamine to glutamate. PurL transfers the ammonia molecule to FGAR to form FGAM in an ATP-dependent manner. PurS interacts with PurQ and PurL and is thought to assist in the transfer of the ammonia molecule from PurQ to PurL. This is Phosphoribosylformylglycinamidine synthase subunit PurS from Thermotoga maritima (strain ATCC 43589 / DSM 3109 / JCM 10099 / NBRC 100826 / MSB8).